We begin with the raw amino-acid sequence, 205 residues long: Dephospho-CoA kinase (205 aa).

Residues Leu-7 to Thr-204 enclose the DPCK domain. Gly-15–Ala-20 contacts ATP.

It belongs to the CoaE family.

It is found in the cytoplasm. It carries out the reaction 3'-dephospho-CoA + ATP = ADP + CoA + H(+). The protein operates within cofactor biosynthesis; coenzyme A biosynthesis; CoA from (R)-pantothenate: step 5/5. Functionally, catalyzes the phosphorylation of the 3'-hydroxyl group of dephosphocoenzyme A to form coenzyme A. This chain is Dephospho-CoA kinase, found in Aromatoleum aromaticum (strain DSM 19018 / LMG 30748 / EbN1) (Azoarcus sp. (strain EbN1)).